Reading from the N-terminus, the 186-residue chain is Tumor necrosis factor alpha-induced protein 8-like protein 1 (186 aa).

This sequence belongs to the TNFAIP8 family.

Its subcellular location is the cytoplasm. In Gallus gallus (Chicken), this protein is Tumor necrosis factor alpha-induced protein 8-like protein 1 (TNFAIP8L1).